A 96-amino-acid chain; its full sequence is Co-chaperonin GroES (96 aa).

It belongs to the GroES chaperonin family. Heptamer of 7 subunits arranged in a ring. Interacts with the chaperonin GroEL.

It is found in the cytoplasm. Together with the chaperonin GroEL, plays an essential role in assisting protein folding. The GroEL-GroES system forms a nano-cage that allows encapsulation of the non-native substrate proteins and provides a physical environment optimized to promote and accelerate protein folding. GroES binds to the apical surface of the GroEL ring, thereby capping the opening of the GroEL channel. The polypeptide is Co-chaperonin GroES (Vibrio campbellii (strain ATCC BAA-1116)).